The sequence spans 120 residues: NAD(P)H-quinone oxidoreductase subunit 3, chloroplastic (120 aa).

The next 3 membrane-spanning stretches (helical) occupy residues 9–29 (IFWAFLIISSAIPILAFLISG), 64–84 (MFALVFVVLDVETVFLYPWAM), and 88–108 (VLGVPVFIEAFIFVLILIVGS).

This sequence belongs to the complex I subunit 3 family. In terms of assembly, NDH is composed of at least 16 different subunits, 5 of which are encoded in the nucleus.

Its subcellular location is the plastid. The protein resides in the chloroplast thylakoid membrane. It catalyses the reaction a plastoquinone + NADH + (n+1) H(+)(in) = a plastoquinol + NAD(+) + n H(+)(out). The catalysed reaction is a plastoquinone + NADPH + (n+1) H(+)(in) = a plastoquinol + NADP(+) + n H(+)(out). NDH shuttles electrons from NAD(P)H:plastoquinone, via FMN and iron-sulfur (Fe-S) centers, to quinones in the photosynthetic chain and possibly in a chloroplast respiratory chain. The immediate electron acceptor for the enzyme in this species is believed to be plastoquinone. Couples the redox reaction to proton translocation, and thus conserves the redox energy in a proton gradient. The polypeptide is NAD(P)H-quinone oxidoreductase subunit 3, chloroplastic (Gossypium barbadense (Sea Island cotton)).